A 380-amino-acid polypeptide reads, in one-letter code: Queuine tRNA-ribosyltransferase (380 aa).

Catalysis depends on D96, which acts as the Proton acceptor. Substrate-binding positions include 96-100, D150, Q193, and G220; that span reads DSGGF. Residues 251–257 form an RNA binding region; that stretch reads GVGAPDS. Residue D270 is the Nucleophile of the active site. Positions 275-279 are RNA binding; important for wobble base 34 recognition; that stretch reads TRIAR. C308, C310, C313, and H339 together coordinate Zn(2+).

Belongs to the queuine tRNA-ribosyltransferase family. In terms of assembly, homodimer. Within each dimer, one monomer is responsible for RNA recognition and catalysis, while the other monomer binds to the replacement base PreQ1. The cofactor is Zn(2+).

It catalyses the reaction 7-aminomethyl-7-carbaguanine + guanosine(34) in tRNA = 7-aminomethyl-7-carbaguanosine(34) in tRNA + guanine. It participates in tRNA modification; tRNA-queuosine biosynthesis. Catalyzes the base-exchange of a guanine (G) residue with the queuine precursor 7-aminomethyl-7-deazaguanine (PreQ1) at position 34 (anticodon wobble position) in tRNAs with GU(N) anticodons (tRNA-Asp, -Asn, -His and -Tyr). Catalysis occurs through a double-displacement mechanism. The nucleophile active site attacks the C1' of nucleotide 34 to detach the guanine base from the RNA, forming a covalent enzyme-RNA intermediate. The proton acceptor active site deprotonates the incoming PreQ1, allowing a nucleophilic attack on the C1' of the ribose to form the product. After dissociation, two additional enzymatic reactions on the tRNA convert PreQ1 to queuine (Q), resulting in the hypermodified nucleoside queuosine (7-(((4,5-cis-dihydroxy-2-cyclopenten-1-yl)amino)methyl)-7-deazaguanosine). The polypeptide is Queuine tRNA-ribosyltransferase (Streptococcus thermophilus (strain CNRZ 1066)).